The chain runs to 281 residues: L-cysteine S-thiosulfotransferase subunit SoxA (281 aa).

The N-terminal stretch at M1–A25 is a signal peptide. C99 and C130 are oxidised to a cystine. The Cytochrome c domain maps to A175–K281. C195 and H199 together coordinate heme. Position 238 (R238) interacts with substrate. Residue C242 participates in heme binding. C242 serves as the catalytic Cysteine persulfide intermediate.

Belongs to the SoxA family. Heterodimer of SoxA and SoxX. Heme serves as cofactor. Post-translationally, cysteine persulfide at Cys-242.

Its subcellular location is the periplasm. It catalyses the reaction L-cysteinyl-[SoxY protein] + thiosulfate + 2 Fe(III)-[cytochrome c] = S-sulfosulfanyl-L-cysteinyl-[SoxY protein] + 2 Fe(II)-[cytochrome c] + 2 H(+). It carries out the reaction S-sulfanyl-L-cysteinyl-[SoxY protein] + thiosulfate + 2 Fe(III)-[cytochrome c] = S-(2-sulfodisulfanyl)-L-cysteinyl-[SoxY protein] + 2 Fe(II)-[cytochrome c] + 2 H(+). C-type monoheme cytochrome, which is part of the SoxAX cytochrome complex involved in sulfur oxidation. The SoxAX complex catalyzes the formation of a heterodisulfide bond between the conserved cysteine residue on a sulfur carrier SoxYZ complex subunit SoxY and thiosulfate or other inorganic sulfur substrates. This leads to the intermediary formation of conspicuous sulfur globules inside of the cells. The protein is L-cysteine S-thiosulfotransferase subunit SoxA of Allochromatium vinosum (Chromatium vinosum).